The chain runs to 250 residues: tRNA (guanine-N(1)-)-methyltransferase (250 aa).

Residues glycine 116 and 136 to 141 contribute to the S-adenosyl-L-methionine site; that span reads IGDYVL.

This sequence belongs to the RNA methyltransferase TrmD family. In terms of assembly, homodimer.

The protein localises to the cytoplasm. The enzyme catalyses guanosine(37) in tRNA + S-adenosyl-L-methionine = N(1)-methylguanosine(37) in tRNA + S-adenosyl-L-homocysteine + H(+). Specifically methylates guanosine-37 in various tRNAs. This is tRNA (guanine-N(1)-)-methyltransferase from Pseudomonas syringae pv. tomato (strain ATCC BAA-871 / DC3000).